The primary structure comprises 478 residues: 7-dehydrocholesterol reductase (478 aa).

The interval 1-28 (MMASDRVRKRHKGSANGAQTVEKEPSKE) is disordered. A run of 6 helical transmembrane segments spans residues 43-63 (LSGVILLLCFAPFLVSFFIMA), 97-117 (WAAAKIYAIWVTFQVVLYMCV), 180-200 (WIPLLWCTNILGYAVSTFAFI), 269-289 (VTNSMILVNVLQAVYVVDFFW), 309-329 (LGWGDCVWLPFLYTLQGLYLV), and 333-353 (IQLSTPHAAGVLILGLVGYYI). Residues lysine 361, arginine 365, methionine 398, tryptophan 403, and 410 to 411 (NY) each bind NADP(+). A helical transmembrane segment spans residues 424–444 (ACGGNHLLPYFYIIYMTILLV). NADP(+)-binding positions include aspartate 450, 454-458 (CSNKY), and tyrosine 465.

It belongs to the ERG4/ERG24 family.

The protein localises to the endoplasmic reticulum membrane. The catalysed reaction is cholesterol + NADP(+) = 7-dehydrocholesterol + NADPH + H(+). It catalyses the reaction 7-dehydrodesmosterol + NADPH + H(+) = desmosterol + NADP(+). It functions in the pathway steroid biosynthesis; cholesterol biosynthesis. Functionally, catalyzes the last step of the cholesterol synthesis pathway, which transforms cholesta-5,7-dien-3beta-ol (7-dehydrocholesterol,7-DHC) into cholesterol by reducing the C7-C8 double bond of its sterol core. Can also metabolize cholesta-5,7,24-trien-3beta-ol (7-dehydrodemosterol, 7-DHD) to desmosterol, which is then metabolized by the Delta(24)-sterol reductase (DHCR24) to cholesterol. Modulates ferroptosis (a form of regulated cell death driven by iron-dependent lipid peroxidation) through the metabolic breakdown of the anti-ferroptotic metabolites 7-DHC and 7-DHD which, when accumulated, divert the propagation of peroxyl radical-mediated damage from phospholipid components to its sterol core, protecting plasma and mitochondrial membranes from phospholipid autoxidation. This is 7-dehydrocholesterol reductase (dhcr7) from Danio rerio (Zebrafish).